We begin with the raw amino-acid sequence, 97 residues long: Large ribosomal subunit protein eL21 (97 aa).

The protein belongs to the eukaryotic ribosomal protein eL21 family.

The polypeptide is Large ribosomal subunit protein eL21 (Methanoculleus marisnigri (strain ATCC 35101 / DSM 1498 / JR1)).